Reading from the N-terminus, the 360-residue chain is Phospho-N-acetylmuramoyl-pentapeptide-transferase (360 aa).

10 helical membrane-spanning segments follow: residues 26 to 46 (AIVS…RMIA), 72 to 92 (PTMG…LWAY), 94 to 114 (SNPY…IGFV), 132 to 152 (WKYF…YLAG), 168 to 188 (VMPQ…VGTG), 199 to 219 (GLAI…AWAT), 236 to 256 (AGEL…FLWF), 263 to 283 (VFMG…IAVL), 288 to 308 (FLLV…ILQV), and 338 to 358 (VIVR…ATLK).

Belongs to the glycosyltransferase 4 family. MraY subfamily. Mg(2+) serves as cofactor.

It is found in the cell inner membrane. The enzyme catalyses UDP-N-acetyl-alpha-D-muramoyl-L-alanyl-gamma-D-glutamyl-meso-2,6-diaminopimeloyl-D-alanyl-D-alanine + di-trans,octa-cis-undecaprenyl phosphate = di-trans,octa-cis-undecaprenyl diphospho-N-acetyl-alpha-D-muramoyl-L-alanyl-D-glutamyl-meso-2,6-diaminopimeloyl-D-alanyl-D-alanine + UMP. Its pathway is cell wall biogenesis; peptidoglycan biosynthesis. In terms of biological role, catalyzes the initial step of the lipid cycle reactions in the biosynthesis of the cell wall peptidoglycan: transfers peptidoglycan precursor phospho-MurNAc-pentapeptide from UDP-MurNAc-pentapeptide onto the lipid carrier undecaprenyl phosphate, yielding undecaprenyl-pyrophosphoryl-MurNAc-pentapeptide, known as lipid I. In Enterobacter sp. (strain 638), this protein is Phospho-N-acetylmuramoyl-pentapeptide-transferase.